The chain runs to 2049 residues: Polyunsaturated fatty acid synthase subunit B (2049 aa).

Ketosynthase family 3 (KS3) domains follow at residues 15–442 (EKRI…VFEE) and 468–908 (NMRI…LLSD). Active-site for beta-ketoacyl synthase 1 activity residues include Cys-196, His-333, and His-368. Residues 467–984 (NNMRIAITGM…LGETLAQEAD (518 aa)) are chain length factor (CLF) domain. The acyltransferase (AT) domain stretch occupies residues 1044-1377 (RVAFMYGEGR…QRSHVTGAMD (334 aa)). The disordered stretch occupies residues 1500–1531 (NKDNQPAVAPAATAAPTPKPKPAASSGKPVPS). A compositionally biased stretch (low complexity) spans 1505–1531 (PAVAPAATAAPTPKPKPAASSGKPVPS). Positions 1579–1887 (SRAFMKTYGV…SRANKLYELF (309 aa)) are enoyl reductase (ER) domain.

Component of the polyunsaturated fatty acid synthase complex composed of at least ORF-A, ORF-B and ORF-C.

Its pathway is lipid metabolism; fatty acid biosynthesis. Poliketide synthase-like protein; part of the polyunsaturated fatty acid synthase composed of the 3 PKS-like subunits A, B and C. While the saturated fatty acids (SFAs) in Thraustochytrium are produced by the conventional fatty acid synthase (FAS) pathway, polyunsaturated fatty acids (PUFAs) including docosahexeanoic acid (DHA) and docosapentaenoic acid (DPA) are synthesized via an anaerobical PKS pathway. PUFA synthase assimilates fatty acyl-CoA, the product of FAS, as the starter unit to synthesize DPA, and this starter unit may be butyryl-CoA, hexanoyl-CoA, or octanoyl-CoA. DPA and DHA biosynthesis seem to differ by the reduction at the N-3 position by PUFA synthase, not the extension of carbon chain. In DHA biosynthesis, PUFA synthase extends the fatty acyl chain from the methyl toward the carboxyl end, and the double bond is formed when the carbon chain is growing, instead of afterward. Therefore, PUFA synthase is unable to transform DPA to DHA, suggesting that DPA is not the precursor of DHA. Moreover, DPA molecule is partly extended by FAS KS domain, so DPA biosynthesis is less dependent on PUFA synthase KS domain than DHA. This is Polyunsaturated fatty acid synthase subunit B from Thraustochytrium sp. (strain ATCC 26185 / S-3).